The chain runs to 781 residues: Probable aminopeptidase 2 (781 aa).

Substrate-binding positions include glutamate 105 and 237–241 (GAMEN). Histidine 272 serves as a coordination point for Zn(2+). Glutamate 273 serves as the catalytic Proton acceptor. Zn(2+) is bound by residues histidine 276 and glutamate 295.

This sequence belongs to the peptidase M1 family. Requires Zn(2+) as cofactor.

It localises to the cytoplasm. The chain is Probable aminopeptidase 2 (ape2) from Sulfurisphaera tokodaii (strain DSM 16993 / JCM 10545 / NBRC 100140 / 7) (Sulfolobus tokodaii).